The sequence spans 346 residues: Uracil-DNA glycosylase (346 aa).

Residues 1–105 (MSGKITDFFE…KLKNEEKSEE (105 aa)) form a disordered region. Positions 20–29 (AENKDNDKEL) are enriched in basic and acidic residues. Over residues 30-42 (TSTTTTTTTTSTT) the composition is skewed to low complexity. Basic residues predominate over residues 43–64 (SKKKVAAAPKKKAAVASKKRKH). The segment covering 67 to 86 (SDEETDKEEQQNDDDDDGEE) has biased composition (acidic residues). Asp-186 functions as the Proton acceptor in the catalytic mechanism.

This sequence belongs to the uracil-DNA glycosylase (UDG) superfamily. UNG family.

Its subcellular location is the mitochondrion. It localises to the nucleus. The catalysed reaction is Hydrolyzes single-stranded DNA or mismatched double-stranded DNA and polynucleotides, releasing free uracil.. In terms of biological role, excises uracil residues from the DNA which can arise as a result of misincorporation of dUMP residues by DNA polymerase or due to deamination of cytosine. In Dictyostelium discoideum (Social amoeba), this protein is Uracil-DNA glycosylase (uglA).